We begin with the raw amino-acid sequence, 334 residues long: Aspartate carbamoyltransferase catalytic subunit (334 aa).

Residues Arg-70 and Thr-71 each coordinate carbamoyl phosphate. Lys-98 contacts L-aspartate. Arg-120, His-150, and Gln-153 together coordinate carbamoyl phosphate. Arg-183 and Arg-239 together coordinate L-aspartate. Positions 280 and 281 each coordinate carbamoyl phosphate.

The protein belongs to the aspartate/ornithine carbamoyltransferase superfamily. ATCase family. Heterododecamer (2C3:3R2) of six catalytic PyrB chains organized as two trimers (C3), and six regulatory PyrI chains organized as three dimers (R2).

The enzyme catalyses carbamoyl phosphate + L-aspartate = N-carbamoyl-L-aspartate + phosphate + H(+). Its pathway is pyrimidine metabolism; UMP biosynthesis via de novo pathway; (S)-dihydroorotate from bicarbonate: step 2/3. Its function is as follows. Catalyzes the condensation of carbamoyl phosphate and aspartate to form carbamoyl aspartate and inorganic phosphate, the committed step in the de novo pyrimidine nucleotide biosynthesis pathway. This Pseudomonas paraeruginosa (strain DSM 24068 / PA7) (Pseudomonas aeruginosa (strain PA7)) protein is Aspartate carbamoyltransferase catalytic subunit.